A 673-amino-acid polypeptide reads, in one-letter code: UvrABC system protein B (673 aa).

The Helicase ATP-binding domain occupies 26 to 414 (EGLEDGLAHQ…GDEVVDQVVR (389 aa)). 39 to 46 (GVTGSGKT) contacts ATP. A Beta-hairpin motif is present at residues 92-115 (YYDYYQPEAYVPSSDTFIEKDASI). In terms of domain architecture, Helicase C-terminal spans 431 to 597 (QVDDLLSEIR…GLNKKVVDIL (167 aa)). Residues 633–668 (QQKIHELEGQMMQHAQNLEFEEAAQIRDQLHQLREL) form the UVR domain.

The protein belongs to the UvrB family. Forms a heterotetramer with UvrA during the search for lesions. Interacts with UvrC in an incision complex.

The protein resides in the cytoplasm. In terms of biological role, the UvrABC repair system catalyzes the recognition and processing of DNA lesions. A damage recognition complex composed of 2 UvrA and 2 UvrB subunits scans DNA for abnormalities. Upon binding of the UvrA(2)B(2) complex to a putative damaged site, the DNA wraps around one UvrB monomer. DNA wrap is dependent on ATP binding by UvrB and probably causes local melting of the DNA helix, facilitating insertion of UvrB beta-hairpin between the DNA strands. Then UvrB probes one DNA strand for the presence of a lesion. If a lesion is found the UvrA subunits dissociate and the UvrB-DNA preincision complex is formed. This complex is subsequently bound by UvrC and the second UvrB is released. If no lesion is found, the DNA wraps around the other UvrB subunit that will check the other stand for damage. In Salmonella paratyphi A (strain ATCC 9150 / SARB42), this protein is UvrABC system protein B.